The sequence spans 414 residues: Peptidoglycan beta-N-acetylmuramidase NamZ (414 aa).

The N-terminal stretch at 1–23 (MRKTIFAFLTGLMMFGTITAASA) is a signal peptide.

The protein belongs to the glycoside hydrolase 171 family. In terms of assembly, homodimer in solution.

It is found in the secreted. The enzyme catalyses Hydrolysis of terminal, non-reducing N-acetylmuramic residues.. Functionally, catalyzes the exo-lytic cleavage of beta-1,4-N-acetylmuramate (beta-1,4-MurNAc) from the non-reducing ends of peptidoglycan chains. Specifically hydrolyzes the natural, peptidoglycan-derived disaccharide MurNAc-GlcNAc and the artificial substrate para-nitrophenyl beta-N-acetylmuramic acid (pNP-MurNAc). Requires a MurNAc entity at the non-reducing end, and cannot cleave GlcNAc-MurNAc. Probably plays a role in cell wall turnover and recycling. This is Peptidoglycan beta-N-acetylmuramidase NamZ from Bacillus subtilis (strain 168).